The chain runs to 166 residues: Putative 4-hydroxy-4-methyl-2-oxoglutarate aldolase (166 aa).

Substrate-binding positions include glycine 81–isoleucine 84 and arginine 103. Residue aspartate 104 participates in a divalent metal cation binding.

It belongs to the class II aldolase/RraA-like family. As to quaternary structure, homotrimer. The cofactor is a divalent metal cation.

It catalyses the reaction 4-hydroxy-4-methyl-2-oxoglutarate = 2 pyruvate. The catalysed reaction is oxaloacetate + H(+) = pyruvate + CO2. Its function is as follows. Catalyzes the aldol cleavage of 4-hydroxy-4-methyl-2-oxoglutarate (HMG) into 2 molecules of pyruvate. Also contains a secondary oxaloacetate (OAA) decarboxylase activity due to the common pyruvate enolate transition state formed following C-C bond cleavage in the retro-aldol and decarboxylation reactions. This chain is Putative 4-hydroxy-4-methyl-2-oxoglutarate aldolase, found in Corynebacterium glutamicum (strain ATCC 13032 / DSM 20300 / JCM 1318 / BCRC 11384 / CCUG 27702 / LMG 3730 / NBRC 12168 / NCIMB 10025 / NRRL B-2784 / 534).